The primary structure comprises 410 residues: Mating-type locus allele B5 protein (410 aa).

Positions 1-110 (MSSDPNFSLT…FNVVSPAVVC (110 aa)) are variable domain between B alleles. The homeobox; TALE-type DNA-binding region spans 107–184 (AVVCRNLSED…NARRRSGWSH (78 aa)). The segment at 111–410 (RNLSEDLPAY…PFLCLSVAFV (300 aa)) is highly conserved between B alleles. Disordered regions lie at residues 201-241 (VRAK…TPAD), 275-336 (NKKT…PELS), and 366-395 (ILQS…PDEV). Residues 206-222 (SSSNQSTPPSPTSEYPS) are compositionally biased toward low complexity. A Nuclear localization signal motif is present at residues 276 to 308 (KKTPKPGMPRPVTTVTKRQPARKTKPAAKPKSR). Residues 294-307 (QPARKTKPAAKPKS) show a composition bias toward basic residues. Polar residues predominate over residues 312-336 (PRASTTPSIDSTLDSSKLESTPELS). A not essential for B5 function region spans residues 333-410 (PELSMCSTAD…PFLCLSVAFV (78 aa)). The segment covering 375–388 (RGNRKVKALPKRAG) has biased composition (basic residues).

Belongs to the TALE/M-ATYP homeobox family.

It is found in the nucleus. Functionally, the B locus has at least 25 alleles, and any combination of two different B alleles yields a multimeric regulatory protein, that activates genes responsible for the pathogenicity and for the sexual development of the fungus within the corn plant. The protein is Mating-type locus allele B5 protein of Mycosarcoma maydis (Corn smut fungus).